The following is a 437-amino-acid chain: Phosphatidylserine decarboxylase proenzyme 1, mitochondrial (437 aa).

The N-terminal 18 residues, 1–18, are a transit peptide targeting the mitochondrion; sequence MLKFHRNVKPQFGAFARY. Residues 19–38 are Mitochondrial matrix-facing; that stretch reads SSLGKHNSRKRVGIIRLAYG. A helical membrane pass occupies residues 39–57; that stretch reads LTGIGLVGLAGFAWAQDRH. Residues 58 to 437 lie on the Mitochondrial intermembrane side of the membrane; sequence EKTYQKKGVQ…PLGRVVPSSH (380 aa). Catalysis depends on charge relay system; for autoendoproteolytic cleavage activity residues Asp-157, His-287, and Ser-401. Catalysis depends on Ser-401, which acts as the Schiff-base intermediate with substrate; via pyruvic acid; for decarboxylase activity. Ser-401 bears the Pyruvic acid (Ser); by autocatalysis mark.

Belongs to the phosphatidylserine decarboxylase family. PSD-B subfamily. Eukaryotic type I sub-subfamily. In terms of assembly, heterodimer of a large membrane-associated beta subunit and a small pyruvoyl-containing alpha subunit. It depends on pyruvate as a cofactor. Is synthesized initially as an inactive proenzyme. Formation of the active enzyme involves a self-maturation process in which the active site pyruvoyl group is generated from an internal serine residue via an autocatalytic post-translational modification. Two non-identical subunits are generated from the proenzyme in this reaction, and the pyruvate is formed at the N-terminus of the alpha chain, which is derived from the carboxyl end of the proenzyme. The autoendoproteolytic cleavage occurs by a canonical serine protease mechanism, in which the side chain hydroxyl group of the serine supplies its oxygen atom to form the C-terminus of the beta chain, while the remainder of the serine residue undergoes an oxidative deamination to produce ammonia and the pyruvoyl prosthetic group on the alpha chain. During this reaction, the Ser that is part of the protease active site of the proenzyme becomes the pyruvoyl prosthetic group, which constitutes an essential element of the active site of the mature decarboxylase.

It localises to the mitochondrion. It is found in the mitochondrion inner membrane. It catalyses the reaction a 1,2-diacyl-sn-glycero-3-phospho-L-serine + H(+) = a 1,2-diacyl-sn-glycero-3-phosphoethanolamine + CO2. It functions in the pathway phospholipid metabolism; phosphatidylethanolamine biosynthesis; phosphatidylethanolamine from CDP-diacylglycerol: step 2/2. Its function is as follows. Catalyzes the formation of phosphatidylethanolamine (PtdEtn) from phosphatidylserine (PtdSer). Plays a central role in phospholipid metabolism and in the interorganelle trafficking of phosphatidylserine. Together with psd2 and psd3, responsible for the majority of phosphatidylethanolamine synthesis. The sequence is that of Phosphatidylserine decarboxylase proenzyme 1, mitochondrial from Schizosaccharomyces pombe (strain 972 / ATCC 24843) (Fission yeast).